A 420-amino-acid chain; its full sequence is Diaminobutyrate--2-oxoglutarate transaminase (420 aa).

The residue at position 271 (Lys271) is an N6-(pyridoxal phosphate)lysine.

The protein belongs to the class-III pyridoxal-phosphate-dependent aminotransferase family. It depends on pyridoxal 5'-phosphate as a cofactor.

It carries out the reaction L-2,4-diaminobutanoate + 2-oxoglutarate = L-aspartate 4-semialdehyde + L-glutamate. The protein operates within amine and polyamine biosynthesis; ectoine biosynthesis; L-ectoine from L-aspartate 4-semialdehyde: step 1/3. Functionally, catalyzes reversively the conversion of L-aspartate beta-semialdehyde (ASA) to L-2,4-diaminobutyrate (DABA) by transamination with L-glutamate. The protein is Diaminobutyrate--2-oxoglutarate transaminase (ectB) of Streptomyces anulatus (Streptomyces chrysomallus).